The chain runs to 208 residues: AN1-type zinc finger protein 6 (208 aa).

The A20-type zinc finger occupies 8–42; the sequence is SQVPMLCSTGCGFYGNPRTNGMCSVCYKEHLQRQN. Zn(2+)-binding residues include C14, C18, C30, and C33. Polar residues predominate over residues 41–68; the sequence is QNSSNGRISPPATSVSSLSESLPVQCTD. Positions 41–140 are disordered; that stretch reads QNSSNGRISP…PSEEQSKSLE (100 aa). At S49 the chain carries Phosphoserine. Over residues 80 to 94 the composition is skewed to low complexity; the sequence is STSSSMQPSPVSNQS. Composition is skewed to polar residues over residues 95 to 110 and 120 to 133; these read LLSE…STSV and VQAS…QPSE. The segment at 143–189 adopts an AN1-type zinc-finger fold; that stretch reads KQKKNRCFMCRKKVGLTGFECRCGNVYCGVHRYSDVHNCSYNYKADA. Residues C149, C152, C163, C165, C170, H173, H179, and C181 each contribute to the Zn(2+) site. Residue K204 is modified to N6-acetyllysine.

In terms of assembly, interacts with PKN1. Interacts with TRAF2. Interacts with mono- and polyubiquitin. Interacts with PEX6. Interacts with PEX5 (Cys-linked ubiquitinated). In terms of tissue distribution, widely expressed with high level in heart, skeletal muscle, liver, kidney and placenta.

Its subcellular location is the cytoplasm. Functionally, involved in regulation of TNF-alpha induced NF-kappa-B activation and apoptosis. Involved in modulation of 'Lys-48'-linked polyubiquitination status of TRAF2 and decreases association of TRAF2 with RIPK1. Required for PTS1 target sequence-dependent protein import into peroxisomes and PEX5 stability; may cooperate with PEX6. In vitro involved in PEX5 export from the cytosol to peroxisomes. The polypeptide is AN1-type zinc finger protein 6 (ZFAND6) (Homo sapiens (Human)).